Reading from the N-terminus, the 313-residue chain is E3 ubiquitin-protein ligase siah2 (313 aa).

Positions 1-49 (MSRPSSAGPCASKPCGKQKQPPPPPPHAPSLPATISGGPGASAPPAPTA) are disordered. Over residues 20-29 (QPPPPPPHAP) the composition is skewed to pro residues. The RING-type zinc-finger motif lies at 69–104 (CPVCFDYVLPPILQCQAGHLVCNQCRQKLSCCPTCR). The segment at 119-311 (VASAVLFPCK…LGINVTISTC (193 aa)) is SBD. An SIAH-type zinc finger spans residues 122 to 182 (AVLFPCKYAS…VMQHLTHSHK (61 aa)). Zn(2+) is bound by residues Cys-127, Cys-134, His-146, Cys-150, Cys-157, Cys-164, His-176, and His-181.

The protein belongs to the SINA (Seven in absentia) family. As to quaternary structure, homodimer. As to expression, widely expressed in early embryos until stage 40. It is then expressed in brain, spinal cord and in the developing and mature eye.

It is found in the cytoplasm. It carries out the reaction S-ubiquitinyl-[E2 ubiquitin-conjugating enzyme]-L-cysteine + [acceptor protein]-L-lysine = [E2 ubiquitin-conjugating enzyme]-L-cysteine + N(6)-ubiquitinyl-[acceptor protein]-L-lysine.. Its pathway is protein modification; protein ubiquitination. In terms of biological role, E3 ubiquitin-protein ligase that mediates ubiquitination and subsequent proteasomal degradation of target proteins. E3 ubiquitin ligases accept ubiquitin from an E2 ubiquitin-conjugating enzyme in the form of a thioester and then directly transfers the ubiquitin to targeted substrates. Involved in eye morphogenesis, probably triggers the ubiquitin-mediated degradation of different substrates. May play a role in the regulation of the cellular clock function. In Xenopus laevis (African clawed frog), this protein is E3 ubiquitin-protein ligase siah2 (siah2).